A 346-amino-acid polypeptide reads, in one-letter code: UDP-3-O-acylglucosamine N-acyltransferase (346 aa).

His-240 functions as the Proton acceptor in the catalytic mechanism.

The protein belongs to the transferase hexapeptide repeat family. LpxD subfamily. In terms of assembly, homotrimer.

The enzyme catalyses a UDP-3-O-[(3R)-3-hydroxyacyl]-alpha-D-glucosamine + a (3R)-hydroxyacyl-[ACP] = a UDP-2-N,3-O-bis[(3R)-3-hydroxyacyl]-alpha-D-glucosamine + holo-[ACP] + H(+). The protein operates within bacterial outer membrane biogenesis; LPS lipid A biosynthesis. Its function is as follows. Catalyzes the N-acylation of UDP-3-O-acylglucosamine using 3-hydroxyacyl-ACP as the acyl donor. Is involved in the biosynthesis of lipid A, a phosphorylated glycolipid that anchors the lipopolysaccharide to the outer membrane of the cell. In Bacteroides thetaiotaomicron (strain ATCC 29148 / DSM 2079 / JCM 5827 / CCUG 10774 / NCTC 10582 / VPI-5482 / E50), this protein is UDP-3-O-acylglucosamine N-acyltransferase.